Here is a 514-residue protein sequence, read N- to C-terminus: Putative exoglucanase type C (514 aa).

The first 17 residues, 1–17, serve as a signal peptide directing secretion; the sequence is MYRIVATASALIAAARA. Residues 18–439 are catalytic; that stretch reads QQVCSLNTET…RDVPNSKVSF (422 aa). Glutamate 229 serves as the catalytic Nucleophile. Residue glutamate 234 is the Proton donor of the active site. Residue asparagine 287 is glycosylated (N-linked (GlcNAc...) asparagine). Residues 408-424 are compositionally biased toward polar residues; it reads STKVGSQRGSCATTSGK. Disordered stretches follow at residues 408-433 and 448-485; these read STKV…RDVP and GSTY…QWGQ. The interval 440–482 is linker; it reads SNIKFGPIGSTYKSDGTTPNPPASSSTTGSSTPTNPPAGSVDQ. Residues 462–479 show a composition bias toward low complexity; the sequence is ASSSTTGSSTPTNPPAGS. The region spanning 478 to 514 is the CBM1 domain; the sequence is GSVDQWGQCGGQNYSGPTTCKSPFTCKKINDFYSQCQ. Intrachain disulfides connect cysteine 486–cysteine 503 and cysteine 497–cysteine 513. Asparagine 490 is a glycosylation site (N-linked (GlcNAc...) asparagine).

It belongs to the glycosyl hydrolase 7 (cellulase C) family.

The enzyme catalyses Hydrolysis of (1-&gt;4)-beta-D-glucosidic linkages in cellulose and cellotetraose, releasing cellobiose from the non-reducing ends of the chains.. The polypeptide is Putative exoglucanase type C (Fusarium oxysporum (Fusarium vascular wilt)).